Here is a 62-residue protein sequence, read N- to C-terminus: Photosystem II reaction center protein Z (62 aa).

Helical transmembrane passes span 8-28 (AVFALIATSSILLISVPVVFA) and 41-61 (FSGTSLWIGLVFLVGILNSLI).

It belongs to the PsbZ family. In terms of assembly, PSII is composed of 1 copy each of membrane proteins PsbA, PsbB, PsbC, PsbD, PsbE, PsbF, PsbH, PsbI, PsbJ, PsbK, PsbL, PsbM, PsbT, PsbY, PsbZ, Psb30/Ycf12, at least 3 peripheral proteins of the oxygen-evolving complex and a large number of cofactors. It forms dimeric complexes.

The protein localises to the plastid. It is found in the chloroplast thylakoid membrane. May control the interaction of photosystem II (PSII) cores with the light-harvesting antenna, regulates electron flow through the 2 photosystem reaction centers. PSII is a light-driven water plastoquinone oxidoreductase, using light energy to abstract electrons from H(2)O, generating a proton gradient subsequently used for ATP formation. This Vitis vinifera (Grape) protein is Photosystem II reaction center protein Z.